Consider the following 1166-residue polypeptide: ATP-dependent helicase/deoxyribonuclease subunit B (1166 aa).

Residues 1-390 (MGVEFLVGRS…HPLIEFIRSS (390 aa)) form the UvrD-like helicase ATP-binding domain. Residue 8–15 (GRSGSGKT) coordinates ATP. Residues 281 to 586 (TKRHQHAPEL…HFSLIPPALD (306 aa)) form the UvrD-like helicase C-terminal domain. Residues Cys801, Cys1121, Cys1124, and Cys1130 each contribute to the [4Fe-4S] cluster site.

This sequence belongs to the helicase family. AddB/RexB type 1 subfamily. As to quaternary structure, heterodimer of AddA and AddB. Requires Mg(2+) as cofactor. It depends on [4Fe-4S] cluster as a cofactor.

The heterodimer acts as both an ATP-dependent DNA helicase and an ATP-dependent, dual-direction single-stranded exonuclease. Recognizes the chi site generating a DNA molecule suitable for the initiation of homologous recombination. The AddB subunit has 5' -&gt; 3' nuclease activity but not helicase activity. The chain is ATP-dependent helicase/deoxyribonuclease subunit B from Bacillus velezensis (strain DSM 23117 / BGSC 10A6 / LMG 26770 / FZB42) (Bacillus amyloliquefaciens subsp. plantarum).